The chain runs to 66 residues: Clusterin (66 aa).

Belongs to the clusterin family. As to quaternary structure, antiparallel disulfide-linked heterodimer of an alpha chain and a beta chain. Self-associates and forms higher oligomers. Interacts with a broad range of misfolded proteins, including APP, APOC2 and LYZ. Slightly acidic pH promotes interaction with misfolded proteins. Forms high-molecular weight oligomers upon interaction with misfolded proteins. Interacts with APOA1, LRP2, CLUAP1 and PON1. Interacts with the complement membrane attack complex. Interacts (via alpha chain) with XRCC6. Interacts with SYVN1, COMMD1, BTRC, CUL1 and with ubiquitin and SCF (SKP1-CUL1-F-box protein) E3 ubiquitin-protein ligase complexes. Interacts (via alpha chain) with BAX in stressed cells, where BAX undergoes a conformation change leading to association with the mitochondrial membrane. Does not interact with BAX in unstressed cells. Found in a complex with LTF, CLU, EPPIN and SEMG1. Interacts (immaturely glycosylated pre-secreted form) with HSPA5; this interaction promotes CLU stability and facilitates stress-induced CLU retrotranslocation from the secretory pathway to the mitochondria, thereby reducing stress-induced apoptosis by stabilizing mitochondrial membrane integrity. Interacts with BCL2L1; this interaction releases and activates BAX and promotes cell death. Interacts with TGFBR2 and ACVR1. Interacts (secreted form) with STMN3; this interaction may act as an important modulator during neuronal differentiation. Component of a epididymal complex at least composed of soluble form of prion protein PRNP, CLU, BPI, CES5A, MANBA and GLB1. In terms of processing, proteolytically cleaved on its way through the secretory system, probably within the Golgi lumen. Proteolytic cleavage is not necessary for its chaperone activity. All non-secreted forms are not proteolytically cleaved. Chaperone activity of uncleaved forms is dependent on a non-reducing environment. Post-translationally, polyubiquitinated, leading to proteasomal degradation. Under cellular stress, the intracellular level of cleaved form is reduced due to proteasomal degradation. Heavily N-glycosylated. About 30% of the protein mass is comprised of complex N-linked carbohydrate. Endoplasmic reticulum (ER) stress induces changes in glycosylation status and increases level of hypoglycosylated forms. Core carbohydrates are essential for chaperone activity. Non-secreted forms are hypoglycosylated or unglycosylated.

Its subcellular location is the secreted. The protein resides in the nucleus. The protein localises to the cytoplasm. It is found in the mitochondrion membrane. It localises to the cytosol. Its subcellular location is the microsome. The protein resides in the endoplasmic reticulum. The protein localises to the mitochondrion. It is found in the perinuclear region. It localises to the cytoplasmic vesicle. Its subcellular location is the secretory vesicle. The protein resides in the chromaffin granule. Its function is as follows. Functions as extracellular chaperone that prevents aggregation of non native proteins. Prevents stress-induced aggregation of blood plasma proteins. Inhibits formation of amyloid fibrils by APP, APOC2, B2M, CALCA, CSN3, SNCA and aggregation-prone LYZ variants (in vitro). Does not require ATP. Maintains partially unfolded proteins in a state appropriate for subsequent refolding by other chaperones, such as HSPA8/HSC70. Does not refold proteins by itself. Binding to cell surface receptors triggers internalization of the chaperone-client complex and subsequent lysosomal or proteasomal degradation. When secreted, protects cells against apoptosis and against cytolysis by complement: inhibits assembly of the complement membrane attack complex (MAC) by preventing polymerization of C9 pore component of the MAC complex. Intracellular forms interact with ubiquitin and SCF (SKP1-CUL1-F-box protein) E3 ubiquitin-protein ligase complexes and promote the ubiquitination and subsequent proteasomal degradation of target proteins. Promotes proteasomal degradation of COMMD1 and IKBKB. Modulates NF-kappa-B transcriptional activity. Following stress, promotes apoptosis. Inhibits apoptosis when associated with the mitochondrial membrane by interference with BAX-dependent release of cytochrome c into the cytoplasm. Plays a role in the regulation of cell proliferation. An intracellular form suppresses stress-induced apoptosis by stabilizing mitochondrial membrane integrity through interaction with HSPA5. Secreted form does not affect caspase or BAX-mediated intrinsic apoptosis and TNF-induced NF-kappa-B-activity. Secreted form act as an important modulator during neuronal differentiation through interaction with STMN3. Plays a role in the clearance of immune complexes that arise during cell injury. This is Clusterin (CLU) from Ovis aries (Sheep).